The primary structure comprises 367 residues: Glutamate 5-kinase 2 (367 aa).

ATP is bound at residue K10. The substrate site is built by S50, D136, and N148. ATP-binding positions include 168–169 (TD) and 210–216 (TGGMATK). The PUA domain maps to 275–353 (SGQIVIDAGA…KQIGELLDYD (79 aa)).

Belongs to the glutamate 5-kinase family.

It localises to the cytoplasm. The enzyme catalyses L-glutamate + ATP = L-glutamyl 5-phosphate + ADP. It participates in amino-acid biosynthesis; L-proline biosynthesis; L-glutamate 5-semialdehyde from L-glutamate: step 1/2. Catalyzes the transfer of a phosphate group to glutamate to form L-glutamate 5-phosphate. In Pseudoalteromonas translucida (strain TAC 125), this protein is Glutamate 5-kinase 2.